We begin with the raw amino-acid sequence, 91 residues long: Phosphocarrier protein NPr (91 aa).

An HPr domain is found at 3-90 (KLERQVTICN…ALVDAKFDEA (88 aa)). His-17 acts as the Pros-phosphohistidine intermediate in catalysis.

It belongs to the HPr family.

Its subcellular location is the cytoplasm. In terms of biological role, component of the phosphoenolpyruvate-dependent nitrogen-metabolic phosphotransferase system (nitrogen-metabolic PTS), that seems to be involved in regulating nitrogen metabolism. The phosphoryl group from phosphoenolpyruvate (PEP) is transferred to the phosphoryl carrier protein NPr by enzyme I-Ntr. Phospho-NPr then transfers it to EIIA-Ntr. Could function in the transcriptional regulation of sigma-54 dependent operons in conjunction with the NPr (PtsO) and EIIA-Ntr (PtsN) proteins. This chain is Phosphocarrier protein NPr (ptsO), found in Shewanella violacea (strain JCM 10179 / CIP 106290 / LMG 19151 / DSS12).